Consider the following 161-residue polypeptide: Nucleotide-binding protein NE2248 (161 aa).

It belongs to the YajQ family.

Its function is as follows. Nucleotide-binding protein. The polypeptide is Nucleotide-binding protein NE2248 (Nitrosomonas europaea (strain ATCC 19718 / CIP 103999 / KCTC 2705 / NBRC 14298)).